Reading from the N-terminus, the 500-residue chain is NAD(P)H-quinone oxidoreductase chain 4, chloroplastic (500 aa).

Transmembrane regions (helical) follow at residues 4 to 24 (FPWLTIIVIFPISAGSLMLFL), 35 to 55 (YTICICILELLLTTYAFCYNF), 87 to 107 (IGTILLTGFITTLATLAAFPV), 113 to 130 (LFHFLMLAMYSGQIGSFS), 134 to 154 (LLLFFIMWELELIPVYLLLAM), 167 to 187 (FILYTAGSSIFLLIGVLGLSL), 211 to 231 (ILFYIGFLIAFAVKLPIIPLH), 242 to 262 (HYSTCMLLAGILLKMGAYGLV), 272 to 292 (AHSMFSPWLLVVGTIQIIYAA), 305 to 325 (IAYSSVSHMGFIIIGISSITD), 330 to 350 (GAILQIISHGFIGAALFFLAG), 386 to 406 (LALPGMSGFVAELIVFFGIIT), 416 to 436 (ILIIFVMAIGMILTPIYLLSM), and 462 to 482 (LFLSISILLPIIGIGIYPDFV).

This sequence belongs to the complex I subunit 4 family.

The protein localises to the plastid. Its subcellular location is the chloroplast thylakoid membrane. It catalyses the reaction a plastoquinone + NADH + (n+1) H(+)(in) = a plastoquinol + NAD(+) + n H(+)(out). The enzyme catalyses a plastoquinone + NADPH + (n+1) H(+)(in) = a plastoquinol + NADP(+) + n H(+)(out). The protein is NAD(P)H-quinone oxidoreductase chain 4, chloroplastic of Lepidium virginicum (Virginia pepperweed).